We begin with the raw amino-acid sequence, 220 residues long: Probable cytidylate kinase (220 aa).

Gly10 to Ser18 serves as a coordination point for ATP.

It belongs to the cytidylate kinase family. Type 1 subfamily.

The catalysed reaction is CMP + ATP = CDP + ADP. It catalyses the reaction dCMP + ATP = dCDP + ADP. This chain is Probable cytidylate kinase, found in Encephalitozoon cuniculi (strain GB-M1) (Microsporidian parasite).